Here is a 253-residue protein sequence, read N- to C-terminus: 1-(5-phosphoribosyl)-5-[(5-phosphoribosylamino)methylideneamino] imidazole-4-carboxamide isomerase (253 aa).

Asp-11 (proton acceptor) is an active-site residue. Residue Asp-132 is the Proton donor of the active site.

The protein belongs to the HisA/HisF family.

It localises to the cytoplasm. It catalyses the reaction 1-(5-phospho-beta-D-ribosyl)-5-[(5-phospho-beta-D-ribosylamino)methylideneamino]imidazole-4-carboxamide = 5-[(5-phospho-1-deoxy-D-ribulos-1-ylimino)methylamino]-1-(5-phospho-beta-D-ribosyl)imidazole-4-carboxamide. Its pathway is amino-acid biosynthesis; L-histidine biosynthesis; L-histidine from 5-phospho-alpha-D-ribose 1-diphosphate: step 4/9. This is 1-(5-phosphoribosyl)-5-[(5-phosphoribosylamino)methylideneamino] imidazole-4-carboxamide isomerase from Methylobacterium nodulans (strain LMG 21967 / CNCM I-2342 / ORS 2060).